The chain runs to 216 residues: Ribonuclease HII (216 aa).

An RNase H type-2 domain is found at 33–216 (WPVAGADEAG…RMSFRPFRQV (184 aa)). A divalent metal cation is bound by residues D39, E40, and D130.

The protein belongs to the RNase HII family. The cofactor is Mn(2+). Mg(2+) serves as cofactor.

Its subcellular location is the cytoplasm. The enzyme catalyses Endonucleolytic cleavage to 5'-phosphomonoester.. Endonuclease that specifically degrades the RNA of RNA-DNA hybrids. This Rhizobium meliloti (strain 1021) (Ensifer meliloti) protein is Ribonuclease HII.